The following is a 258-amino-acid chain: Imidazole glycerol phosphate synthase subunit HisF (258 aa).

Catalysis depends on residues Asp-11 and Asp-130.

The protein belongs to the HisA/HisF family. As to quaternary structure, heterodimer of HisH and HisF.

The protein localises to the cytoplasm. The catalysed reaction is 5-[(5-phospho-1-deoxy-D-ribulos-1-ylimino)methylamino]-1-(5-phospho-beta-D-ribosyl)imidazole-4-carboxamide + L-glutamine = D-erythro-1-(imidazol-4-yl)glycerol 3-phosphate + 5-amino-1-(5-phospho-beta-D-ribosyl)imidazole-4-carboxamide + L-glutamate + H(+). Its pathway is amino-acid biosynthesis; L-histidine biosynthesis; L-histidine from 5-phospho-alpha-D-ribose 1-diphosphate: step 5/9. In terms of biological role, IGPS catalyzes the conversion of PRFAR and glutamine to IGP, AICAR and glutamate. The HisF subunit catalyzes the cyclization activity that produces IGP and AICAR from PRFAR using the ammonia provided by the HisH subunit. The chain is Imidazole glycerol phosphate synthase subunit HisF from Methylorubrum extorquens (strain PA1) (Methylobacterium extorquens).